Reading from the N-terminus, the 54-residue chain is Apelin receptor early endogenous ligand (54 aa).

The signal sequence occupies residues 1-23 (MRFQPLFWVFFIFAMSLLFISEQ).

It belongs to the Elabela/Toddler family. In terms of assembly, interacts with APLNR. As to expression, expressed in the placenta. Expressed in syncytiotrophoblasts of the placenta labyrinth at 10.5 dpc. Expressed in placental chorionic trophoblasts (at protein level). Expressed in a small population of epiblast cells in the distal half of the embryo at 7 dpc. Expressed in newly formed definitive endoderm cells in the proximal half of the embryo, while it is not present in extra-embryonic endoderm at 7.5 dpc. This expression pattern then changes to the ventral aspect of the developing foregut pocket and the entire hindgut pocket at 8.5 dpc, before becoming restricted to the foregut overlying the heart and the posterior-most hindgut. Not detected in endothelial precursor cells of the yolk sac at 8 dpc. Expressed in extraembryonic tissues as well as in the chorion at 8.25 dpc. Expressed in endometrial stroma of the uterus of pregnant mice at 8.5 dpc. Expressed in the developing heart, caudal neural tube and trophobasts at 9 dpc. Expressed in the chorionic plate of the chorioallantoic placenta at 9 dpc. Expressed in the posterior half of the ventral neural tube at 9.25 dpc. Expressed in trophoblast cells at the periphery of the placenta at 9.5 dpc. Expressed in collecting ducts of the kidney of pregnant mice at 10.5 dpc. Expressed in the epicardium of the developing heart at 11.5 dpc. Expressed weakly in the adult heart. Expressed in endothelial cells and fibroblasts and weakly in cardiomyocytes.

It is found in the secreted. Its subcellular location is the extracellular space. In terms of biological role, peptide hormone that functions as endogenous ligand for the G-protein-coupled apelin receptor (APLNR/APJ), that plays a role in the regulation of normal cardiovascular function and fluid homeostasis. Functions as a balanced agonist activating both G(i) protein pathway and beta-arrestin pathway of APLNR. Downstream G proteins activation, apelin can inhibit cAMP production and activate key intracellular effectors such as ERKs. On the other hand, APLNR activation induces beta-arrestin recruitment to the membrane leading to desensitization and internalization of the receptor. Required for mesendodermal differentiation, blood vessels formation and heart morphogenesis during early development and for adult cardiovascular homeostasis. Acts as a motogen by promoting mesendodermal cell migration during gastrulation by binding and activating APLNR. Acts as an early embryonic regulator of cellular movement with a role in migration and development of cardiac progenitor cells. May act as a chemoattractant for the activation of angioblast migration toward the embryonic midline, i.e. the position of the future vessel formation, during vasculogenesis. Positively regulates sinus venosus (SV)-derived endothelial cells migration into the developing heart to promote coronary blood vessel sprouting. Plays a role in placental vascular development; promotes placental trophoblast invasion and spiral artery remodeling in the uterus. Involved in the regulation of maternal cardiovascular homeostasis to prevent gestational hypertension and for potent cardioprotective functions during heart failure. Mediates myocardial contractility in an ERK1/2-dependent manner. The polypeptide is Apelin receptor early endogenous ligand (Mus musculus (Mouse)).